Consider the following 363-residue polypeptide: tRNA dimethylallyltransferase (363 aa).

ATP is bound at residue 65 to 72 (GPTASGKS). 67 to 72 (TASGKS) lines the substrate pocket. Interaction with substrate tRNA regions lie at residues 90–93 (DSMQ) and 214–218 (QRLIR).

It belongs to the IPP transferase family. In terms of assembly, monomer. It depends on Mg(2+) as a cofactor.

The catalysed reaction is adenosine(37) in tRNA + dimethylallyl diphosphate = N(6)-dimethylallyladenosine(37) in tRNA + diphosphate. Its function is as follows. Catalyzes the transfer of a dimethylallyl group onto the adenine at position 37 in tRNAs that read codons beginning with uridine, leading to the formation of N6-(dimethylallyl)adenosine (i(6)A). The polypeptide is tRNA dimethylallyltransferase (Rickettsia massiliae (strain Mtu5)).